The following is a 388-amino-acid chain: Alpha-2B adrenergic receptor (388 aa).

A helical membrane pass occupies residues 1-25 (AIAAVITFLILFTIFGNALVILAVL). The Cytoplasmic segment spans residues 26–36 (TSRSLRAPQNL). Residues 37-62 (FLVSLAAADILVATLIIPFSLANELL) form a helical membrane-spanning segment. At 63–72 (GYWYFRRTWC) the chain is on the extracellular side. Cysteines 72 and 151 form a disulfide. A helical membrane pass occupies residues 73-95 (EVYLALDVLFCTSSIVHLCAISL). Residues 96-117 (DRYWAVSRALEYNSKRTPRXIK) lie on the Cytoplasmic side of the membrane. The chain crosses the membrane as a helical span at residues 118-140 (CIILTVWLIAAAISLPPLIYKGD). The Extracellular portion of the chain corresponds to 141-156 (QGPQPRGRPQCKLNQE). A helical transmembrane segment spans residues 157–180 (AWYILSSSIGSFFAPCLIMILVYL). The Cytoplasmic segment spans residues 181-352 (RIYVIAKRSN…LTREKRFTFV (172 aa)). Residues 193-309 (GPRAKGASRE…ASACNPPLQQ (117 aa)) form a disordered region. Residues 239–249 (PTGEKEGKTPE) show a composition bias toward basic and acidic residues. Positions 279–291 (PEEEAEEEEEECE) are enriched in acidic residues. A compositionally biased stretch (low complexity) spans 292–302 (PQAAPASSASA). A helical membrane pass occupies residues 353–376 (LAVVIGVFVLCWFPFFFSYSLGAI). The Extracellular portion of the chain corresponds to 377-385 (CPQRCKVPH). The chain crosses the membrane as a helical span at residues 386 to 388 (GLF).

This sequence belongs to the G-protein coupled receptor 1 family. Adrenergic receptor subfamily. ADRA2B sub-subfamily. In terms of assembly, interacts with RAB26. Interacts with PPP1R9B.

It localises to the cell membrane. Its function is as follows. Alpha-2 adrenergic receptors mediate the catecholamine-induced inhibition of adenylate cyclase through the action of G proteins. This chain is Alpha-2B adrenergic receptor (ADRA2B), found in Orycteropus afer (Aardvark).